A 244-amino-acid polypeptide reads, in one-letter code: 7-cyano-7-deazaguanine synthase (244 aa).

An ATP-binding site is contributed by 14–24 (FSGGQDSATCV). Zn(2+)-binding residues include Cys202, Cys217, Cys220, and Cys223.

It belongs to the QueC family. Requires Zn(2+) as cofactor.

The catalysed reaction is 7-carboxy-7-deazaguanine + NH4(+) + ATP = 7-cyano-7-deazaguanine + ADP + phosphate + H2O + H(+). It participates in purine metabolism; 7-cyano-7-deazaguanine biosynthesis. Its function is as follows. Catalyzes the ATP-dependent conversion of 7-carboxy-7-deazaguanine (CDG) to 7-cyano-7-deazaguanine (preQ(0)). The sequence is that of 7-cyano-7-deazaguanine synthase from Burkholderia thailandensis (strain ATCC 700388 / DSM 13276 / CCUG 48851 / CIP 106301 / E264).